A 233-amino-acid polypeptide reads, in one-letter code: Riboflavin kinase (233 aa).

The H-T-H motif-like stretch occupies residues 1 to 104; that stretch reads MVRDIKTFKF…YKKIFDDEGT (104 aa). Residues 105-233 are riboflavin kinase; that stretch reads IKIKGEVFSG…GDFVEVEVIL (129 aa). Residue 114 to 119 participates in CDP binding; sequence GVGEGR. The Mg(2+) site is built by threonine 143 and asparagine 145. Residues threonine 200 and glutamate 208 each coordinate FMN. CDP is bound at residue 213–216; that stretch reads VKLR.

This sequence belongs to the archaeal riboflavin kinase family. The cofactor is Mg(2+).

It catalyses the reaction riboflavin + CTP = CDP + FMN + H(+). Its pathway is cofactor biosynthesis; FMN biosynthesis; FMN from riboflavin (CTP route): step 1/1. In terms of biological role, catalyzes the CTP-dependent phosphorylation of riboflavin (vitamin B2) to form flavin mononucleotide (FMN). This is Riboflavin kinase (ribK) from Archaeoglobus fulgidus (strain ATCC 49558 / DSM 4304 / JCM 9628 / NBRC 100126 / VC-16).